A 476-amino-acid polypeptide reads, in one-letter code: Zinc metalloproteinase/disintegrin (476 aa).

The signal sequence occupies residues 1 to 20 (MIQVLLVIICLADFPYQGTS). Positions 21–184 (IILESGNVND…KSDEPIKASQ (164 aa)) are excised as a propeptide. Q185 carries the pyrrolidone carboxylic acid modification. The region spanning 191–387 (RYIELVVVAD…RNPQCILNEP (197 aa)) is the Peptidase M12B domain. Residues E194 and D278 each coordinate Ca(2+). Intrachain disulfides connect C302–C382, C342–C366, and C344–C349. Zn(2+) is bound at residue H327. The active site involves E328. Residues H331 and H337 each coordinate Zn(2+). C382 and N385 together coordinate Ca(2+). Positions 388–403 (LRTDTVSTPVSGNELL) are excised as a propeptide. Positions 395–476 (TPVSGNELLE…AGCPRNGFYG (82 aa)) constitute a Disintegrin domain. 6 disulfide bridges follow: C409–C424, C411–C419, C418–C441, C432–C438, C437–C462, and C450–C469. Residues 454 to 456 (KGD) carry the Cell attachment site motif.

This sequence belongs to the venom metalloproteinase (M12B) family. P-II subfamily. P-IId sub-subfamily. As to quaternary structure, homodimer; disulfide-linked (disintegrin). Zn(2+) serves as cofactor. As to expression, expressed by the venom gland.

It localises to the secreted. With respect to regulation, the metalloproteinase is inhibited by EDTA, o-phenanthroline, and cysteine. Glutathione does not inhibit the enzymatic activity. Its function is as follows. Shows weak degradation of alpha-fibrinogen, but has no activity on beta- and gamma-chains. Digests luteinizing hormone-releasing hormone (LH-RH) and oxidized insulin at X-Leu, X-Phe, and X-Val bonds as well as X-His bond. Does not show fibrinogen-clotting activity. Does not show hemorrhagic activity. In terms of biological role, inhibits ADP-induced platelet aggregation. The protein is Zinc metalloproteinase/disintegrin of Gloydius brevicauda (Korean slamosa snake).